The following is a 129-amino-acid chain: Dormancy-associated protein 2 (129 aa).

Positions 1–25 are cleaved as a signal peptide; sequence MDSRKAMLILGLLAMVLLISSEVSA. A disordered region spans residues 110-129; sequence GGYHGGGGHGGHGGASNNGN.

The protein belongs to the DRM1/ARP family. In terms of tissue distribution, expressed in axilary buds. Detected in growing stems, leaflets and floral organs, but not in roots.

This Pisum sativum (Garden pea) protein is Dormancy-associated protein 2.